Consider the following 146-residue polypeptide: 3-dehydroquinate dehydratase (146 aa).

Y24 acts as the Proton acceptor in catalysis. The substrate site is built by N73, H79, and D86. Catalysis depends on H99, which acts as the Proton donor. Substrate contacts are provided by residues 100 to 101 (LS) and R110.

Belongs to the type-II 3-dehydroquinase family. As to quaternary structure, homododecamer.

It catalyses the reaction 3-dehydroquinate = 3-dehydroshikimate + H2O. The protein operates within metabolic intermediate biosynthesis; chorismate biosynthesis; chorismate from D-erythrose 4-phosphate and phosphoenolpyruvate: step 3/7. Its function is as follows. Catalyzes a trans-dehydration via an enolate intermediate. The chain is 3-dehydroquinate dehydratase from Shewanella baltica (strain OS223).